The primary structure comprises 290 residues: Programmed cell death 1 ligand 1 (290 aa).

Positions 1–18 (MRIFAGIIFTACCHLLRA) are cleaved as a signal peptide. Residues 19–127 (FTITAPKDLY…YGGADYKRIT (109 aa)) form the Ig-like V-type domain. The Extracellular portion of the chain corresponds to 19–239 (FTITAPKDLY…ATHPPQNRTH (221 aa)). Residue Asn35 is glycosylated (N-linked (GlcNAc...) asparagine). Disulfide bonds link Cys40/Cys114 and Cys154/Cys208. Residues 133–224 (PYRKINQRIS…PGQNHTAELI (92 aa)) enclose the Ig-like C2-type domain. Asn191, Asn199, Asn218, and Asn236 each carry an N-linked (GlcNAc...) asparagine glycan. A helical transmembrane segment spans residues 240-260 (WVLLGSILLFLIVVSTVLLFL). Over 261-290 (RKQVRMLDVEKCGVEDTSSKNRNDTQFEET) the chain is Cytoplasmic.

Belongs to the immunoglobulin superfamily. BTN/MOG family. In terms of assembly, interacts with PDCD1. Interacts with CMTM4 and CMTM6. Interacts with CD80. Ubiquitinated; STUB1 likely mediates polyubiquitination of PD-L1/CD274 triggering its degradation. Ubiquitinated by MARCHF8; leading to degradation. Deubiquitinated by USP22; leading to stabilization. In terms of tissue distribution, highly expressed in the heart, thymus, skeletal muscle, and lung. Weakly expressed in the kidney, spleen, thyroid, and liver. Expressed on activated dendritic cells, B-cells and macrophages. Expressed in numerous tumor cells lines of lymphoid origin.

It localises to the cell membrane. The protein resides in the early endosome membrane. The protein localises to the recycling endosome membrane. Plays a critical role in induction and maintenance of immune tolerance to self. As a ligand for the inhibitory receptor PDCD1/PD-1, modulates the activation threshold of T-cells and limits T-cell effector response. Through a yet unknown activating receptor, may costimulate T-cell subsets that predominantly produce interleukin-10 (IL10). In terms of biological role, the PDCD1-mediated inhibitory pathway is exploited by tumors to attenuate anti-tumor immunity and escape destruction by the immune system, thereby facilitating tumor survival. The interaction with PDCD1/PD-1 inhibits cytotoxic T lymphocytes (CTLs) effector function. The blockage of the PDCD1-mediated pathway results in the reversal of the exhausted T-cell phenotype and the normalization of the anti-tumor response, providing a rationale for cancer immunotherapy. This is Programmed cell death 1 ligand 1 (Cd274) from Mus musculus (Mouse).